Consider the following 343-residue polypeptide: Protein RecA (343 aa).

68–75 lines the ATP pocket; that stretch reads GPESSGKT.

The protein belongs to the RecA family.

The protein resides in the cytoplasm. Can catalyze the hydrolysis of ATP in the presence of single-stranded DNA, the ATP-dependent uptake of single-stranded DNA by duplex DNA, and the ATP-dependent hybridization of homologous single-stranded DNAs. It interacts with LexA causing its activation and leading to its autocatalytic cleavage. The sequence is that of Protein RecA from Syntrophobacter fumaroxidans (strain DSM 10017 / MPOB).